The primary structure comprises 196 residues: MSYYAFEGLIPVVHPTAFVHPSAVLIGDVIVGAGVYIGPLASLRGDYGRLIVQAGANIQDGCIMHGYCDTDTIVGENGHIGHGAILHGCVIGRDALVGMNSVIMDGAVIGEESIVAAMSFVKAGFRGEKRQLLMGTPARAVRSVSDDELHWKRLNTKEYQDLVGRCHASLHETQPLRQMEENRPRLQGTTDVTPKR.

Residues 173-196 (TQPLRQMEENRPRLQGTTDVTPKR) are disordered. A compositionally biased stretch (polar residues) spans 187 to 196 (QGTTDVTPKR).

It belongs to the transferase hexapeptide repeat family.

Its pathway is amine and polyamine metabolism; carnitine metabolism. Functionally, overproduction of CaiE stimulates the activity of CaiB and CaiD. The sequence is that of Carnitine operon protein CaiE from Escherichia coli O127:H6 (strain E2348/69 / EPEC).